Reading from the N-terminus, the 338-residue chain is Glycerol-1-phosphate dehydrogenase [NAD(P)+] (338 aa).

NAD(+) contacts are provided by residues 81–85 (GRPLD) and 103–106 (TSAS). Asp108 contacts substrate. Ser112 lines the NAD(+) pocket. Asp157 serves as a coordination point for substrate. Residues Asp157 and His238 each contribute to the Zn(2+) site. Residue His242 participates in substrate binding. A Zn(2+)-binding site is contributed by His256.

Belongs to the glycerol-1-phosphate dehydrogenase family. As to quaternary structure, homodimer. The cofactor is Zn(2+).

The protein localises to the cytoplasm. The enzyme catalyses sn-glycerol 1-phosphate + NAD(+) = dihydroxyacetone phosphate + NADH + H(+). The catalysed reaction is sn-glycerol 1-phosphate + NADP(+) = dihydroxyacetone phosphate + NADPH + H(+). It functions in the pathway membrane lipid metabolism; glycerophospholipid metabolism. Functionally, catalyzes the NAD(P)H-dependent reduction of dihydroxyacetonephosphate (DHAP or glycerone phosphate) to glycerol 1-phosphate (G1P). The G1P thus generated is used as the glycerophosphate backbone of phospholipids in the cellular membranes of Archaea. The protein is Glycerol-1-phosphate dehydrogenase [NAD(P)+] of Pyrobaculum calidifontis (strain DSM 21063 / JCM 11548 / VA1).